The sequence spans 138 residues: Large ribosomal subunit protein bL17 (138 aa).

This sequence belongs to the bacterial ribosomal protein bL17 family. As to quaternary structure, part of the 50S ribosomal subunit. Contacts protein L32.

The protein is Large ribosomal subunit protein bL17 of Nitrobacter hamburgensis (strain DSM 10229 / NCIMB 13809 / X14).